We begin with the raw amino-acid sequence, 221 residues long: Probable GTP-binding protein EngB (221 aa).

Positions 23 to 211 (PLREVAFAGR…DNLIIKWLFE (189 aa)) constitute an EngB-type G domain. S38 and T60 together coordinate Mg(2+).

It belongs to the TRAFAC class TrmE-Era-EngA-EngB-Septin-like GTPase superfamily. EngB GTPase family. Mg(2+) is required as a cofactor.

Functionally, necessary for normal cell division and for the maintenance of normal septation. The chain is Probable GTP-binding protein EngB from Polynucleobacter asymbioticus (strain DSM 18221 / CIP 109841 / QLW-P1DMWA-1) (Polynucleobacter necessarius subsp. asymbioticus).